The following is a 54-amino-acid chain: Ovomucoid (54 aa).

One can recognise a Kazal-like domain in the interval 4–54; that stretch reads VDCSDYPKPVCTLDYMPLCGSDNKTYSNKCNFCNAVVDSNGTITLSHFGRC. 3 disulfides stabilise this stretch: C6–C36, C14–C33, and C22–C54. The N-linked (GlcNAc...) asparagine glycan is linked to N43.

The protein resides in the secreted. This is Ovomucoid from Coloeus monedula (Eurasian jackdaw).